A 450-amino-acid chain; its full sequence is Saccharopine dehydrogenase [NADP(+), L-glutamate-forming] (450 aa).

NADP(+) contacts are provided by residues 9-12 (SGFV), 32-34 (CRT), 54-55 (DV), I75, 97-98 (TS), 124-126 (VDP), and S174. Residues 98–99 (SY) and D125 contribute to the L-saccharopine site. L-saccharopine-binding positions include R223 and 244–246 (TLR).

The protein belongs to the saccharopine dehydrogenase family. Homodimer.

The protein localises to the cytoplasm. The catalysed reaction is L-saccharopine + NADP(+) + H2O = (S)-2-amino-6-oxohexanoate + L-glutamate + NADPH + H(+). It participates in amino-acid biosynthesis; L-lysine biosynthesis via AAA pathway; L-lysine from L-alpha-aminoadipate (fungal route): step 2/3. The sequence is that of Saccharopine dehydrogenase [NADP(+), L-glutamate-forming] from Schizosaccharomyces pombe (strain 972 / ATCC 24843) (Fission yeast).